Consider the following 217-residue polypeptide: Urease accessory protein UreF (217 aa).

Belongs to the UreF family. As to quaternary structure, ureD, UreF and UreG form a complex that acts as a GTP-hydrolysis-dependent molecular chaperone, activating the urease apoprotein by helping to assemble the nickel containing metallocenter of UreC. The UreE protein probably delivers the nickel.

It is found in the cytoplasm. Functionally, required for maturation of urease via the functional incorporation of the urease nickel metallocenter. The polypeptide is Urease accessory protein UreF (Ruegeria pomeroyi (strain ATCC 700808 / DSM 15171 / DSS-3) (Silicibacter pomeroyi)).